An 89-amino-acid polypeptide reads, in one-letter code: Small ribosomal subunit protein uS15 (89 aa).

Belongs to the universal ribosomal protein uS15 family. As to quaternary structure, part of the 30S ribosomal subunit. Forms a bridge to the 50S subunit in the 70S ribosome, contacting the 23S rRNA.

Its function is as follows. One of the primary rRNA binding proteins, it binds directly to 16S rRNA where it helps nucleate assembly of the platform of the 30S subunit by binding and bridging several RNA helices of the 16S rRNA. Forms an intersubunit bridge (bridge B4) with the 23S rRNA of the 50S subunit in the ribosome. The polypeptide is Small ribosomal subunit protein uS15 (Corynebacterium efficiens (strain DSM 44549 / YS-314 / AJ 12310 / JCM 11189 / NBRC 100395)).